The chain runs to 216 residues: Superoxide dismutase [Cu-Zn], chloroplastic (216 aa).

Residues 1–62 (MACHSALAAV…ASPRSMVVVA (62 aa)) constitute a chloroplast transit peptide. Cu cation-binding residues include H108, H110, and H125. Cysteines 119 and 208 form a disulfide. Residues H125, H133, H142, and D145 each coordinate Zn(2+). H182 provides a ligand contact to Cu cation.

This sequence belongs to the Cu-Zn superoxide dismutase family. As to quaternary structure, homotetramer. The cofactor is Cu cation. Requires Zn(2+) as cofactor.

The protein resides in the plastid. It localises to the chloroplast. The enzyme catalyses 2 superoxide + 2 H(+) = H2O2 + O2. Functionally, destroys radicals which are normally produced within the cells and which are toxic to biological systems. The chain is Superoxide dismutase [Cu-Zn], chloroplastic (SODCP) from Zantedeschia aethiopica (White calla lily).